Reading from the N-terminus, the 109-residue chain is Large ribosomal subunit protein uL22 (109 aa).

Belongs to the universal ribosomal protein uL22 family. In terms of assembly, part of the 50S ribosomal subunit.

This protein binds specifically to 23S rRNA; its binding is stimulated by other ribosomal proteins, e.g. L4, L17, and L20. It is important during the early stages of 50S assembly. It makes multiple contacts with different domains of the 23S rRNA in the assembled 50S subunit and ribosome. Its function is as follows. The globular domain of the protein is located near the polypeptide exit tunnel on the outside of the subunit, while an extended beta-hairpin is found that lines the wall of the exit tunnel in the center of the 70S ribosome. In Methylobacillus flagellatus (strain ATCC 51484 / DSM 6875 / VKM B-1610 / KT), this protein is Large ribosomal subunit protein uL22.